The sequence spans 345 residues: MHFLDQAKIFIRSGAGGPGAVSFRREKFIEYGGPDGGHGGKGGDIIFEAVPGLNTLIDFRYTQHFKAQRGHGGAGSNRTGAGGEDLLIKVPVGTQILSEDREQVLADFTVPGQRQVFLRGGDGGRGNASYKTSTNRAPRQHGTGWPAEEMWVWLRLKLLADCGLVGLPNAGKSTFINAVSNAKAKVGAYPFTTIRPQLGVATHKGREFVVADIPGLIEGAAEGAGIGDRFLGHIERCRVLLHLVDASGDDPVGAYEIVRGELDAYGAGLADKPQVLALNKIDAVDAKTLDKLAKKLAKLGGGEVMRLSGASGEGLPAVLDKIIEILGPAPETTAANENDEPWSPI.

Positions 1-159 (MHFLDQAKIF…MWVWLRLKLL (159 aa)) constitute an Obg domain. The segment at 121–142 (GDGGRGNASYKTSTNRAPRQHG) is disordered. The OBG-type G domain occupies 160-327 (ADCGLVGLPN…VLDKIIEILG (168 aa)). GTP-binding positions include 166–173 (GLPNAGKS), 191–195 (FTTIR), 212–215 (DIPG), 279–282 (NKID), and 308–310 (SGA). Residues Ser173 and Thr193 each coordinate Mg(2+).

This sequence belongs to the TRAFAC class OBG-HflX-like GTPase superfamily. OBG GTPase family. As to quaternary structure, monomer. It depends on Mg(2+) as a cofactor.

It localises to the cytoplasm. In terms of biological role, an essential GTPase which binds GTP, GDP and possibly (p)ppGpp with moderate affinity, with high nucleotide exchange rates and a fairly low GTP hydrolysis rate. Plays a role in control of the cell cycle, stress response, ribosome biogenesis and in those bacteria that undergo differentiation, in morphogenesis control. In Rhizorhabdus wittichii (strain DSM 6014 / CCUG 31198 / JCM 15750 / NBRC 105917 / EY 4224 / RW1) (Sphingomonas wittichii), this protein is GTPase Obg.